Reading from the N-terminus, the 685-residue chain is ATP-dependent zinc metalloprotease FTSH 8, chloroplastic (685 aa).

The transit peptide at 1-37 directs the protein to the chloroplast; the sequence is MAASSACLLGNGLSVYTTKQRFQKLGLDRTSKVTVVK. A thylakoid-targeting transit peptide spans 38–73; the sequence is ASLDEKKHEGRRGFFKLLLGNAAAGVGLLASGNANA. The Lumenal, thylakoid portion of the chain corresponds to 38–161; it reads ASLDEKKHEG…HNAQEDQGSP (124 aa). A helical membrane pass occupies residues 162 to 182; it reads ILNLIGNLAFPVILIGGLFLL. Topologically, residues 183–685 are stromal; the sequence is SRRSSGGMGG…STSTPTPASV (503 aa). 260-267 is an ATP binding site; that stretch reads GPPGTGKT. His481 is a Zn(2+) binding site. Residue Glu482 is part of the active site. 2 residues coordinate Zn(2+): His485 and Asp559.

This sequence in the N-terminal section; belongs to the AAA ATPase family. The protein in the C-terminal section; belongs to the peptidase M41 family. In terms of assembly, heterohexamers with FTSH1, FTSH2 and FTSH5. May also form homooligomers. Zn(2+) serves as cofactor. In terms of tissue distribution, expressed in cotyledons, cauline and rosette leaves, stems, sepals, flovers and siliques. Very low in roots.

The protein localises to the plastid. It is found in the chloroplast thylakoid membrane. In terms of biological role, part of a complex that function as an ATP-dependent zinc metallopeptidase. Involved in the thylakoid formation and in the removal of damaged D1 in the photosystem II, preventing cell death under high-intensity light conditions. The sequence is that of ATP-dependent zinc metalloprotease FTSH 8, chloroplastic (FTSH8) from Arabidopsis thaliana (Mouse-ear cress).